The chain runs to 283 residues: Phosphatidylglycerol--prolipoprotein diacylglyceryl transferase (283 aa).

The next 4 helical transmembrane spans lie at 19 to 39, 59 to 79, 90 to 110, and 120 to 140; these read IGPI…LIGV, LSIW…VLFQ, IIAI…GTLA, and VPFW…QAIG. An a 1,2-diacyl-sn-glycero-3-phospho-(1'-sn-glycerol)-binding site is contributed by R141. 3 consecutive transmembrane segments (helical) span residues 181–201, 212–232, and 245–265; these read TFLY…TLFF, VGTL…WIEG, and IAQV…AWLY.

It belongs to the Lgt family.

Its subcellular location is the cell inner membrane. It carries out the reaction L-cysteinyl-[prolipoprotein] + a 1,2-diacyl-sn-glycero-3-phospho-(1'-sn-glycerol) = an S-1,2-diacyl-sn-glyceryl-L-cysteinyl-[prolipoprotein] + sn-glycerol 1-phosphate + H(+). It functions in the pathway protein modification; lipoprotein biosynthesis (diacylglyceryl transfer). Functionally, catalyzes the transfer of the diacylglyceryl group from phosphatidylglycerol to the sulfhydryl group of the N-terminal cysteine of a prolipoprotein, the first step in the formation of mature lipoproteins. This Nostoc sp. (strain PCC 7120 / SAG 25.82 / UTEX 2576) protein is Phosphatidylglycerol--prolipoprotein diacylglyceryl transferase.